The chain runs to 429 residues: Serine--tRNA ligase (429 aa).

235 to 237 (TAE) serves as a coordination point for L-serine. 266–268 (RSE) is an ATP binding site. Position 289 (Glu289) interacts with L-serine. 353 to 356 (EISS) is a binding site for ATP. Residue Ser389 participates in L-serine binding.

It belongs to the class-II aminoacyl-tRNA synthetase family. Type-1 seryl-tRNA synthetase subfamily. Homodimer. The tRNA molecule binds across the dimer.

It is found in the cytoplasm. The catalysed reaction is tRNA(Ser) + L-serine + ATP = L-seryl-tRNA(Ser) + AMP + diphosphate + H(+). It carries out the reaction tRNA(Sec) + L-serine + ATP = L-seryl-tRNA(Sec) + AMP + diphosphate + H(+). It functions in the pathway aminoacyl-tRNA biosynthesis; selenocysteinyl-tRNA(Sec) biosynthesis; L-seryl-tRNA(Sec) from L-serine and tRNA(Sec): step 1/1. Functionally, catalyzes the attachment of serine to tRNA(Ser). Is also able to aminoacylate tRNA(Sec) with serine, to form the misacylated tRNA L-seryl-tRNA(Sec), which will be further converted into selenocysteinyl-tRNA(Sec). In Haemophilus influenzae (strain PittEE), this protein is Serine--tRNA ligase.